A 1268-amino-acid polypeptide reads, in one-letter code: Neurocan core protein (1268 aa).

An N-terminal signal peptide occupies residues 1 to 22 (MGAGSVWASGLLLLWLLLLVAG). In terms of domain architecture, Ig-like V-type spans 37 to 157 (RMLKSGSGPV…EQDLVTLEVT (121 aa)). 5 disulfide bridges follow: Cys-58-Cys-139, Cys-181-Cys-252, Cys-205-Cys-226, Cys-279-Cys-354, and Cys-303-Cys-324. An N-linked (GlcNAc...) asparagine glycan is attached at Asn-121. Link domains are found at residues 159-254 (VVFH…YCFA) and 258-356 (GGEV…YCFR). N-linked (GlcNAc...) asparagine glycosylation is present at Asn-339. Disordered regions lie at residues 363–391 (QHGD…ELKP), 406–442 (PLMS…SWPS), 472–540 (PLGT…DQSH), and 574–630 (ISPS…LQAS). 2 O-linked (Xyl...) (chondroitin sulfate) serine glycosylation sites follow: Ser-380 and Ser-410. Polar residues predominate over residues 419 to 430 (TWTQAPEETLGS). The span at 575-585 (SPSVPSTESTP) shows a compositional bias: low complexity. Positions 608-617 (PSEPPAPSPG) are enriched in pro residues. Residues 618–630 (PSEALSAVSLQAS) are compositionally biased toward low complexity. Asn-742 carries an N-linked (GlcNAc...) asparagine glycan. The region spanning 960-996 (PTDPCENNPCLHGGTCHTNGTVYGCSCDQGYAGENCE) is the EGF-like 1 domain. 11 disulfide bridges follow: Cys-964/Cys-975, Cys-969/Cys-984, Cys-986/Cys-995, Cys-1002/Cys-1013, Cys-1007/Cys-1022, Cys-1024/Cys-1033, Cys-1040/Cys-1051, Cys-1068/Cys-1160, Cys-1136/Cys-1152, Cys-1167/Cys-1210, and Cys-1196/Cys-1223. An N-linked (GlcNAc...) asparagine glycan is attached at Asn-978. Residues 998–1034 (DIDDCLCSPCENGGTCIDEVNGFICLCLPSYGGSLCE) form the EGF-like 2; calcium-binding domain. The region spanning 1036-1165 (DTEGCDRGWH…LPYVCKKGTV (130 aa)) is the C-type lectin domain. The Sushi domain maps to 1165–1225 (VLCGPPPAVE…WDRPQIMCIK (61 aa)). Asn-1175 is a glycosylation site (N-linked (GlcNAc...) asparagine). Basic residues predominate over residues 1228-1255 (RSHRMRRHHHHPHRHHKPRKEHRKHKRH). The interval 1228–1268 (RSHRMRRHHHHPHRHHKPRKEHRKHKRHPAEDWEKDEGDFC) is disordered.

This sequence belongs to the aggrecan/versican proteoglycan family. O-glycosylated; contains chondroitin sulfate. As to expression, brain.

The protein resides in the secreted. In terms of biological role, may modulate neuronal adhesion and neurite growth during development by binding to neural cell adhesion molecules (NG-CAM and N-CAM). Chondroitin sulfate proteoglycan; binds to hyaluronic acid. The chain is Neurocan core protein (Ncan) from Mus musculus (Mouse).